A 669-amino-acid chain; its full sequence is RNA-binding protein 14 (669 aa).

RRM domains follow at residues 1-73 (MKIF…MSRP) and 79-149 (WKIF…LSTK). Glycyl lysine isopeptide (Lys-Gly) (interchain with G-Cter in SUMO2) cross-links involve residues Lys126, Lys135, Lys138, Lys149, and Lys153. Disordered regions lie at residues 147 to 175 (STKG…DTAF) and 193 to 232 (NSTG…PLTA). The residue at position 161 (Ser161) is a Phosphoserine. At Lys164 the chain carries N6-acetyllysine; alternate. Residue Lys164 forms a Glycyl lysine isopeptide (Lys-Gly) (interchain with G-Cter in SUMO2); alternate linkage. Thr206 carries the phosphothreonine modification. Residues Ser220, Ser242, Ser244, Ser256, Ser272, and Ser280 each carry the phosphoserine modification. The disordered stretch occupies residues 284–303 (PYRGQLASPSSQSAAASSLG). Over residues 287-303 (GQLASPSSQSAAASSLG) the composition is skewed to low complexity. A TRBP-interacting domain; interaction with STIL region spans residues 307–354 (GAQPSASALSSYGGQAAAASSLNSYGAQGSSLASYGNQPSSYGAQAAS). 4 positions are modified to phosphoserine: Ser520, Ser523, Ser527, and Ser562. The tract at residues 566-590 (VANANSTPPPYERTRLSPPRASYDD) is disordered. Thr572 carries the post-translational modification Phosphothreonine. Position 582 is a phosphoserine (Ser582). Lys600 participates in a covalent cross-link: Glycyl lysine isopeptide (Lys-Gly) (interchain with G-Cter in SUMO2). Residues Ser618, Ser620, Ser623, Ser627, Ser643, and Ser649 each carry the phosphoserine modification.

Isoform 1: Interacts with NCOA6, CITED1 and XRCC5/KU86. Isoform 1: Interacts with SS18 isoform 1. Isoform 1: Interacts with SS18 isoform 2. Interacts with STIL and interferes with its interaction with CPAP. Interacts with gamma-tubulin. Part of the HDP-RNP complex composed of at least HEXIM1, PRKDC, XRCC5, XRCC6, paraspeckle proteins (SFPQ, NONO, PSPC1, RBM14, and MATR3) and NEAT1 RNA. Interacts with RBPMS; the interaction allows cooperative assembly of RNA-bound stable cell-specific alternative splicing regulatory complexes. Expressed in all tissues tested, including brain, heart, skeletal muscle, colon, thymus, spleen, kidney, liver, small intestine, placenta, lung and peripheral blood lymphocytes.

Its subcellular location is the nucleus. The protein resides in the nucleolus. The protein localises to the cytoplasm. In terms of biological role, isoform 1 may function as a nuclear receptor coactivator, enhancing transcription through other coactivators such as NCOA6 and CITED1. Isoform 2, functions as a transcriptional repressor, modulating transcriptional activities of coactivators including isoform 1, NCOA6 and CITED1. Regulates centriole biogenesis by suppressing the formation of aberrant centriolar protein complexes in the cytoplasm and thus preserving mitotic spindle integrity. Prevents the formation of the STIL-CPAP complex (which can induce the formation of aberrant centriolar protein complexes) by interfering with the interaction of STIL with CPAP. Plays a role in the regulation of DNA virus-mediated innate immune response by assembling into the HDP-RNP complex, a complex that serves as a platform for IRF3 phosphorylation and subsequent innate immune response activation through the cGAS-STING pathway. Also involved in the regulation of pre-mRNA alternative splicing. The protein is RNA-binding protein 14 (RBM14) of Homo sapiens (Human).